Consider the following 304-residue polypeptide: Ribonuclease Z (304 aa).

Zn(2+) contacts are provided by histidine 64, histidine 66, aspartate 68, histidine 69, histidine 141, aspartate 209, and histidine 267. The Proton acceptor role is filled by aspartate 68.

It belongs to the RNase Z family. As to quaternary structure, homodimer. It depends on Zn(2+) as a cofactor.

The catalysed reaction is Endonucleolytic cleavage of RNA, removing extra 3' nucleotides from tRNA precursor, generating 3' termini of tRNAs. A 3'-hydroxy group is left at the tRNA terminus and a 5'-phosphoryl group is left at the trailer molecule.. Functionally, zinc phosphodiesterase, which displays some tRNA 3'-processing endonuclease activity. Probably involved in tRNA maturation, by removing a 3'-trailer from precursor tRNA. This chain is Ribonuclease Z, found in Thermoplasma volcanium (strain ATCC 51530 / DSM 4299 / JCM 9571 / NBRC 15438 / GSS1).